We begin with the raw amino-acid sequence, 169 residues long: Large ribosomal subunit protein uL10 (169 aa).

The protein belongs to the universal ribosomal protein uL10 family. In terms of assembly, part of the ribosomal stalk of the 50S ribosomal subunit. The N-terminus interacts with L11 and the large rRNA to form the base of the stalk. The C-terminus forms an elongated spine to which L12 dimers bind in a sequential fashion forming a multimeric L10(L12)X complex.

Forms part of the ribosomal stalk, playing a central role in the interaction of the ribosome with GTP-bound translation factors. This is Large ribosomal subunit protein uL10 from Rickettsia africae (strain ESF-5).